Consider the following 200-residue polypeptide: Recombination protein RecR (200 aa).

The C4-type zinc-finger motif lies at 60–75 (CVYCQALTEDDVCNIC). Residues 83-177 (TKLCIIESML…KISRIGFGVP (95 aa)) enclose the Toprim domain.

It belongs to the RecR family.

Functionally, may play a role in DNA repair. It seems to be involved in an RecBC-independent recombinational process of DNA repair. It may act with RecF and RecO. This is Recombination protein RecR from Francisella tularensis subsp. novicida (strain U112).